Reading from the N-terminus, the 393-residue chain is NAD(P)H-quinone oxidoreductase subunit H, chloroplastic (393 aa).

It belongs to the complex I 49 kDa subunit family. NDH is composed of at least 16 different subunits, 5 of which are encoded in the nucleus.

The protein localises to the plastid. The protein resides in the chloroplast thylakoid membrane. The enzyme catalyses a plastoquinone + NADH + (n+1) H(+)(in) = a plastoquinol + NAD(+) + n H(+)(out). It carries out the reaction a plastoquinone + NADPH + (n+1) H(+)(in) = a plastoquinol + NADP(+) + n H(+)(out). In terms of biological role, NDH shuttles electrons from NAD(P)H:plastoquinone, via FMN and iron-sulfur (Fe-S) centers, to quinones in the photosynthetic chain and possibly in a chloroplast respiratory chain. The immediate electron acceptor for the enzyme in this species is believed to be plastoquinone. Couples the redox reaction to proton translocation, and thus conserves the redox energy in a proton gradient. The polypeptide is NAD(P)H-quinone oxidoreductase subunit H, chloroplastic (Nandina domestica (Heavenly bamboo)).